The primary structure comprises 859 residues: Probable helicase A859L (859 aa).

The Helicase ATP-binding domain maps to 178 to 349; that stretch reads YQELRRSGRA…KNRELFGGVA (172 aa). Position 191–198 (191–198) interacts with ATP; sequence MACRCGKT. Positions 298–301 match the DEAH box motif; it reads DECH. Positions 401-553 constitute a Helicase C-terminal domain; sequence HLKTNITAPK…RFYEHLLNPS (153 aa).

The protein belongs to the asfivirus helicase A859L family.

The chain is Probable helicase A859L from African swine fever virus (isolate Tick/South Africa/Pretoriuskop Pr4/1996) (ASFV).